The primary structure comprises 175 residues: Cuticle protein 16.5, isoform A (175 aa).

19 repeat units span residues 17-20 (AAPA), 25-28 (AAPA), 31-34 (AAPA), 38-41 (AAPA), 44-47 (AAPA), 51-54 (AAPA), 57-60 (AAPA), 64-67 (AAPA), 70-73 (AAPA), 77-80 (AAPA), 83-86 (AAPA), 91-94 (AAPA), 99-102 (AAPA), 106-109 (AAPA), 134-137 (AAPA), 144-147 (AAPA), 151-154 (AAPA), 158-161 (AAPA), and 165-168 (AAPA).

Component of the cuticle of migratory locust which contains more than 100 different structural proteins. In Locusta migratoria (Migratory locust), this protein is Cuticle protein 16.5, isoform A.